The sequence spans 186 residues: ADP-ribosylation factor-like protein 8B (186 aa).

An intramembrane region (note=Mediates targeting to membranes) is located at residues 1–19; that stretch reads MLALISRLLDWFRSLFWKE. GTP contacts are provided by residues 29–35, 71–75, and 130–133; these read QYSGKTT, DIGGQ, and NKRD. Residue Lys-141 forms a Glycyl lysine isopeptide (Lys-Gly) (interchain with G-Cter in ubiquitin) linkage.

It belongs to the small GTPase superfamily. Arf family. In terms of assembly, interacts with tubulin. Interacts with BORCS5; recruits ARL8B to lysosomes. Interacts with VPS41; the interaction mediates the recruitment of the HOPS complex to lysosomes. Interacts (GTP-bound form) with PLEKHM2 (via RUN domain); the interaction is required to recruit the motor protein kinesin-1 on lysosomes. Interacts (GTP-bound form) with PLEKHM1 (via RUN domain); the interaction is required for PLEKHM1 localization to lysosomes and for ARL8B function in delivery and degradation of endocytic and autophagic cargo in lysosomes. PLEKHM1 and PLEKHM2 compete for interaction with ARL8B. Interacts (GTP-bound form) with RUFY1; the interaction is required for RUFY1 endosomal location. When GTP-bound, interacts with RUFY3 and RUFY4, but not with RUFY1, nor RUFY2. Ubiquitinated at Lys-141 by RNF167, leading to its degradation.

Its subcellular location is the late endosome membrane. It localises to the lysosome membrane. The protein localises to the cytoplasm. It is found in the cytoskeleton. The protein resides in the spindle. Its subcellular location is the cell projection. It localises to the axon. The protein localises to the synapse. It is found in the cytolytic granule membrane. The protein resides in the early endosome membrane. The catalysed reaction is GTP + H2O = GDP + phosphate + H(+). Its function is as follows. Small GTPase which cycles between active GTP-bound and inactive GDP-bound states. In its active state, binds to a variety of effector proteins playing a key role in the regulation of lysosomal positioning which is important for nutrient sensing, natural killer cell-mediated cytotoxicity and antigen presentation. Along with its effectors, orchestrates lysosomal transport and fusion. Localizes specifically to lysosomal membranes and mediates anterograde lysosomal motility by recruiting PLEKHM2, which in turn recruits the motor protein kinesin-1 on lysosomes. Required for lysosomal and cytolytic granule exocytosis. Critical factor involved in NK cell-mediated cytotoxicity. Drives the polarization of cytolytic granules and microtubule-organizing centers (MTOCs) toward the immune synapse between effector NK lymphocytes and target cells. In neurons, mediates the anterograde axonal long-range transport of presynaptic lysosome-related vesicles required for presynaptic biogenesis and synaptic function. Also acts as a regulator of endosome to lysosome trafficking pathways of special significance for host defense. Recruits RUFY1 onto early endosomes regulating endosomes to trans-Golgi network proteins retrieval. Regulates cargo trafficking to lysosomes by binding to PLEKHM1 and recruiting the HOPS subunit VPS41, resulting in functional assembly of the HOPS complex on lysosomal membranes. Plays an important role in cargo delivery to lysosomes for antigen presentation and microbial killing. Directs the intersection of CD1d with lipid antigens in lysosomes, and plays a role in intersecting phagosomes with lysosomes to generate phagolysosomes that kill microbes. Involved in the process of MHC II presentation. Regulates the delivery of antigens to lysosomes and the formation of MHC II-peptide complexes through the recruitment of the HOPS complex to lysosomes allowing the fusion of late endosomes to lysosomes. May play a role in chromosome segregation. The sequence is that of ADP-ribosylation factor-like protein 8B (ARL8B) from Macaca fascicularis (Crab-eating macaque).